Here is a 666-residue protein sequence, read N- to C-terminus: ATP-dependent RNA helicase DDX51 (666 aa).

Ala2 bears the N-acetylalanine mark. The segment at 9–152 (YPGPDAAAAA…AAPDGPALEE (144 aa)) is disordered. Over residues 10-28 (PGPDAAAAAGPEGAEAGAH) the composition is skewed to low complexity. Over residues 33–48 (ALLERLQSRARERQQQ) the composition is skewed to basic and acidic residues. Low complexity predominate over residues 49–58 (REPAQTEAAA). The span at 65–75 (RRRRRPRRRRR) shows a compositional bias: basic residues. Phosphoserine is present on residues Ser83 and Ser103. A compositionally biased stretch (acidic residues) spans 97-108 (EDAGAESNEEAP). The short motif at 221 to 229 (YFPVQAAVI) is the Q motif element. A Helicase ATP-binding domain is found at 243 to 452 (GRGGYRPSDL…QLGLHQPRLF (210 aa)). 256 to 263 (APTGSGKT) serves as a coordination point for ATP. The short motif at 371 to 374 (DEAD) is the DEAD box element. The 147-residue stretch at 494–640 (VVLHLVLEMG…RHELSSKLLQ (147 aa)) folds into the Helicase C-terminal domain.

It belongs to the DEAD box helicase family. DDX51/DBP6 subfamily.

The protein localises to the nucleus. It localises to the nucleolus. The enzyme catalyses ATP + H2O = ADP + phosphate + H(+). ATP-binding RNA helicase involved in the biogenesis of 60S ribosomal subunits. This Homo sapiens (Human) protein is ATP-dependent RNA helicase DDX51 (DDX51).